We begin with the raw amino-acid sequence, 803 residues long: Volume-regulated anion channel subunit LRRC8C (803 aa).

Residues methionine 1–proline 22 lie on the Cytoplasmic side of the membrane. A helical transmembrane segment spans residues tryptophan 23 to valine 47. Residues methionine 48–alanine 124 lie on the Extracellular side of the membrane. 2 disulfides stabilise this stretch: cysteine 54/cysteine 308 and cysteine 115/cysteine 293. 2 N-linked (GlcNAc...) asparagine glycosylation sites follow: asparagine 64 and asparagine 70. A helical membrane pass occupies residues lysine 125 to phenylalanine 144. Over tryptophan 145–tyrosine 262 the chain is Cytoplasmic. Residues glutamate 177 to asparagine 209 are disordered. Positions asparagine 191–asparagine 209 are enriched in polar residues. Residues serine 212 and serine 215 each carry the phosphoserine modification. The chain crosses the membrane as a helical span at residues valine 263 to valine 284. Over serine 285–histidine 314 the chain is Extracellular. Residues leucine 315 to tyrosine 339 traverse the membrane as a helical segment. Topologically, residues tryptophan 340–glutamate 803 are cytoplasmic. LRR repeat units lie at residues glutamate 397–threonine 420, asparagine 421–isoleucine 443, leucine 446–leucine 466, aspartate 467–phenylalanine 488, lysine 490–leucine 513, asparagine 515–serine 537, leucine 541–valine 563, serine 565–lysine 587, methionine 588–leucine 611, serine 613–histidine 635, leucine 636–leucine 659, threonine 660–cysteine 682, lysine 684–leucine 705, glutamine 706–cysteine 728, lysine 730–leucine 751, phenylalanine 753–cysteine 774, and alanine 776–glutamine 799.

This sequence belongs to the LRRC8 family. Heterohexamer; oligomerizes with other LRRC8 proteins (LRRC8A, LRRC8B, LRRC8D and/or LRRC8E) to form a heterohexamer. Homoheptamer; inactive, likely because it is not targeted to the plasma membrane in the absence of LRRC8A. In vivo, the subunit composition may depend primarily on expression levels, and heterooligomeric channels containing various proportions of the different LRRC8 proteins may coexist. Expressed at highest levels in skeletal muscle, and at moderate levels in heart, lung and peripheral blood leukocytes.

It localises to the cell membrane. It is found in the endoplasmic reticulum membrane. It catalyses the reaction chloride(in) = chloride(out). The enzyme catalyses iodide(out) = iodide(in). The catalysed reaction is taurine(out) = taurine(in). It carries out the reaction 2',3'-cGAMP(out) = 2',3'-cGAMP(in). In terms of biological role, non-essential component of the volume-regulated anion channel (VRAC, also named VSOAC channel), an anion channel required to maintain a constant cell volume in response to extracellular or intracellular osmotic changes. The VRAC channel conducts iodide better than chloride and can also conduct organic osmolytes like taurine. Plays a redundant role in the efflux of amino acids, such as aspartate and glutamate, in response to osmotic stress. The VRAC channel also mediates transport of immunoreactive cyclic dinucleotide GMP-AMP (2'-3'-cGAMP), an immune messenger produced in response to DNA virus in the cytosol. Channel activity requires LRRC8A plus at least one other family member (LRRC8B, LRRC8C, LRRC8D or LRRC8E); channel characteristics depend on the precise subunit composition. The polypeptide is Volume-regulated anion channel subunit LRRC8C (Homo sapiens (Human)).